The primary structure comprises 130 residues: Acyl carrier protein 2, chloroplastic (130 aa).

Residues 1-48 constitute a chloroplast transit peptide; the sequence is MASITGSSVSFKCAPLQSSFNSKNYALKSSVTFWRRTPVMPRGLSVSC. Residues 52–127 form the Carrier domain; that stretch reads PEMVTKVSDI…EAADMIEALQ (76 aa). Ser-87 is subject to O-(pantetheine 4'-phosphoryl)serine.

It belongs to the acyl carrier protein (ACP) family. 4'-phosphopantetheine is transferred from CoA to a specific serine of apo-ACP by acpS. This modification is essential for activity because fatty acids are bound in thioester linkage to the sulfhydryl of the prosthetic group. In terms of tissue distribution, roots, leaves and seeds.

The protein resides in the plastid. The protein localises to the chloroplast. It functions in the pathway lipid metabolism; fatty acid biosynthesis. Carrier of the growing fatty acid chain in fatty acid biosynthesis. The polypeptide is Acyl carrier protein 2, chloroplastic (ACL1.2) (Spinacia oleracea (Spinach)).